A 418-amino-acid polypeptide reads, in one-letter code: Gamma-glutamyl phosphate reductase (418 aa).

Belongs to the gamma-glutamyl phosphate reductase family.

The protein localises to the cytoplasm. The enzyme catalyses L-glutamate 5-semialdehyde + phosphate + NADP(+) = L-glutamyl 5-phosphate + NADPH + H(+). The protein operates within amino-acid biosynthesis; L-proline biosynthesis; L-glutamate 5-semialdehyde from L-glutamate: step 2/2. In terms of biological role, catalyzes the NADPH-dependent reduction of L-glutamate 5-phosphate into L-glutamate 5-semialdehyde and phosphate. The product spontaneously undergoes cyclization to form 1-pyrroline-5-carboxylate. This Syntrophotalea carbinolica (strain DSM 2380 / NBRC 103641 / GraBd1) (Pelobacter carbinolicus) protein is Gamma-glutamyl phosphate reductase.